Reading from the N-terminus, the 119-residue chain is Holo-[acyl-carrier-protein] synthase (119 aa).

Mg(2+) is bound by residues D8 and E60.

The protein belongs to the P-Pant transferase superfamily. AcpS family. Mg(2+) is required as a cofactor.

Its subcellular location is the cytoplasm. The enzyme catalyses apo-[ACP] + CoA = holo-[ACP] + adenosine 3',5'-bisphosphate + H(+). Transfers the 4'-phosphopantetheine moiety from coenzyme A to a Ser of acyl-carrier-protein. This Mycoplasma pneumoniae (strain ATCC 29342 / M129 / Subtype 1) (Mycoplasmoides pneumoniae) protein is Holo-[acyl-carrier-protein] synthase.